A 456-amino-acid polypeptide reads, in one-letter code: tRNA modification GTPase MnmE (456 aa).

Arg23, Glu85, and Arg124 together coordinate (6S)-5-formyl-5,6,7,8-tetrahydrofolate. One can recognise a TrmE-type G domain in the interval 220 to 376 (GVAVLIAGKP…LKESIFQTFI (157 aa)). A K(+)-binding site is contributed by Asn230. GTP-binding positions include 230–235 (NVGKSS), 249–255 (TSVPGTT), and 274–277 (DTAG). Position 234 (Ser234) interacts with Mg(2+). Residues Thr249, Val251, and Thr254 each coordinate K(+). Thr255 provides a ligand contact to Mg(2+). Lys456 provides a ligand contact to (6S)-5-formyl-5,6,7,8-tetrahydrofolate.

Belongs to the TRAFAC class TrmE-Era-EngA-EngB-Septin-like GTPase superfamily. TrmE GTPase family. In terms of assembly, homodimer. Heterotetramer of two MnmE and two MnmG subunits. K(+) is required as a cofactor.

The protein localises to the cytoplasm. Functionally, exhibits a very high intrinsic GTPase hydrolysis rate. Involved in the addition of a carboxymethylaminomethyl (cmnm) group at the wobble position (U34) of certain tRNAs, forming tRNA-cmnm(5)s(2)U34. This is tRNA modification GTPase MnmE from Geobacter sulfurreducens (strain ATCC 51573 / DSM 12127 / PCA).